We begin with the raw amino-acid sequence, 142 residues long: Profilin (142 aa).

It belongs to the profilin family. In terms of assembly, occurs in many kinds of cells as a complex with monomeric actin in a 1:1 ratio. Expressed specifically in coelomocytes in response to injury.

It is found in the cytoplasm. It localises to the cytoskeleton. Functionally, binds to actin and affects the structure of the cytoskeleton. At high concentrations, profilin prevents the polymerization of actin, whereas it enhances it at low concentrations. By binding to PIP2, it inhibits the formation of IP3 and DG. The sequence is that of Profilin from Strongylocentrotus purpuratus (Purple sea urchin).